Here is an 86-residue protein sequence, read N- to C-terminus: Muscarinic toxin MTX6 (86 aa).

The signal sequence occupies residues 1-21 (MKTLLLTLVVVTILCLDLGYT). 4 cysteine pairs are disulfide-bonded: cysteine 24/cysteine 45, cysteine 38/cysteine 63, cysteine 67/cysteine 78, and cysteine 79/cysteine 84.

Belongs to the three-finger toxin family. Short-chain subfamily. Aminergic toxin sub-subfamily. In terms of assembly, monomer. As to expression, expressed by the venom gland.

It is found in the secreted. Its function is as follows. Binds to the muscarinic acetylcholine receptor (CHRM). The sequence is that of Muscarinic toxin MTX6 from Ophiophagus hannah (King cobra).